The chain runs to 132 residues: Small ribosomal subunit protein uS11 (132 aa).

The protein belongs to the universal ribosomal protein uS11 family. In terms of assembly, part of the 30S ribosomal subunit. Interacts with proteins S7 and S18. Binds to IF-3.

In terms of biological role, located on the platform of the 30S subunit, it bridges several disparate RNA helices of the 16S rRNA. Forms part of the Shine-Dalgarno cleft in the 70S ribosome. The polypeptide is Small ribosomal subunit protein uS11 (Alkaliphilus metalliredigens (strain QYMF)).